The sequence spans 136 residues: Large ribosomal subunit protein eL27 (136 aa).

A KOW domain is found at 5-40 (MKPGKVVLVLAGRYSGRKAVIVKNIDDGTSDRPYSH). N6-acetyllysine occurs at positions 27 and 93.

It belongs to the eukaryotic ribosomal protein eL27 family. Component of the large ribosomal subunit. Interacts with RRP1B. Component of the large ribosomal subunit. Interacts with RRP1B. Interacts with DHX33.

It localises to the cytoplasm. It is found in the cytosol. The protein resides in the rough endoplasmic reticulum. Its function is as follows. Component of the large ribosomal subunit. Required for proper rRNA processing and maturation of 28S and 5.8S rRNAs. This is Large ribosomal subunit protein eL27 (RPL27) from Bos taurus (Bovine).